A 118-amino-acid chain; its full sequence is Flowering-promoting factor 1-like protein 4 (118 aa).

It belongs to the FPF1 family.

This Oryza sativa subsp. japonica (Rice) protein is Flowering-promoting factor 1-like protein 4.